The primary structure comprises 46 residues: GAVPCGKDGRQCRNHADCCNCCPIGTCAPSTNWILPGCSTGQFMTR.

Disulfide bonds link cysteine 5–cysteine 19, cysteine 12–cysteine 22, cysteine 18–cysteine 27, and cysteine 21–cysteine 38. Methionine 44 carries the D-methionine modification. Residue arginine 46 is a propeptide, removed by a carboxypeptidase.

This sequence belongs to the conotoxin I1 superfamily. As to expression, expressed by the venom duct.

It localises to the secreted. Functionally, iota-conotoxins bind to voltage-gated sodium channels (Nav) and act as agonists by shifting the voltage-dependence of activation to more hyperpolarized levels. Produces general excitatory symptoms. The sequence is that of Iota-conotoxin-like M11.1 from Conus magus (Magical cone).